The chain runs to 122 residues: Large ribosomal subunit protein uL18 (122 aa).

Belongs to the universal ribosomal protein uL18 family. In terms of assembly, part of the 50S ribosomal subunit; part of the 5S rRNA/L5/L18/L25 subcomplex. Contacts the 5S and 23S rRNAs.

This is one of the proteins that bind and probably mediate the attachment of the 5S RNA into the large ribosomal subunit, where it forms part of the central protuberance. This Heliobacterium modesticaldum (strain ATCC 51547 / Ice1) protein is Large ribosomal subunit protein uL18.